We begin with the raw amino-acid sequence, 629 residues long: Polyadenylate-binding protein, cytoplasmic and nuclear (629 aa).

The segment at 1–47 is disordered; it reads MTLENKAEASPATKEETTTEAAPAEGEAKTESSEEKGSKEDQGDNAS. Over residues 26–42 the composition is skewed to basic and acidic residues; it reads GEAKTESSEEKGSKEDQ. 4 RRM domains span residues 46–124, 134–211, 227–304, and 330–407; these read ASLY…WSQR, GNIY…PHVP, TNVF…RAKK, and VNLY…LAQR. The interval 465-543 is disordered; that stretch reads GANPQMMMRP…RRKDGESRVA (79 aa). Composition is skewed to low complexity over residues 493-506 and 514-531; these read MYGA…QGGF and GGQP…QFRG. Residues 542-624 form the PABC domain; sequence VADSISNALE…AITAYNEYLN (83 aa).

The protein belongs to the polyadenylate-binding protein type-1 family.

The protein resides in the cytoplasm. It is found in the nucleus. Binds the poly(A) tail of mRNA. Appears to be an important mediator of the multiple roles of the poly(A) tail in mRNA biogenesis, stability and translation. In the nucleus, involved in both mRNA cleavage and polyadenylation. Is also required for efficient mRNA export to the cytoplasm. Acts in concert with a poly(A)-specific nuclease (PAN) to affect poly(A) tail shortening, which may occur concomitantly with either nucleocytoplasmic mRNA transport or translational initiation. In the cytoplasm, stimulates translation initiation and regulates mRNA decay through translation termination-coupled poly(A) shortening, probably mediated by PAN. The polypeptide is Polyadenylate-binding protein, cytoplasmic and nuclear (PAB1) (Yarrowia lipolytica (strain CLIB 122 / E 150) (Yeast)).